Here is a 540-residue protein sequence, read N- to C-terminus: Isocitrate lyase (540 aa).

Residue 103–105 (SGW) participates in substrate binding. Asp-187 contributes to the Mg(2+) binding site. The Proton acceptor role is filled by Cys-225. Substrate-binding positions include 226–227 (GH), 385–389 (NNSPS), and Thr-458.

The protein belongs to the isocitrate lyase/PEP mutase superfamily. Isocitrate lyase family. Homotetramer. Mg(2+) is required as a cofactor.

The enzyme catalyses D-threo-isocitrate = glyoxylate + succinate. Its pathway is carbohydrate metabolism; glyoxylate cycle; (S)-malate from isocitrate: step 1/2. It functions in the pathway one-carbon metabolism; formaldehyde assimilation via serine pathway. In the presence of magnesium, inhibited by oxalate, potassium cyanide, manganese, silver, cadmium and to a lesser extent by succinate, glycolate, iodoacetamide, DL-penicillamine, aluminum, sodium, potassium, lithium and strontium. Involved in the metabolic adaptation in response to environmental changes. Catalyzes the reversible formation of succinate and glyoxylate from isocitrate, a key step of the glyoxylate cycle, which operates as an anaplerotic route for replenishing the tricarboxylic acid cycle during growth on fatty acid substrates. May be involved in the assimilation of one-carbon compounds via the isocitrate lyase-positive serine pathway. The protein is Isocitrate lyase of Hyphomicrobium methylovorum.